Here is a 372-residue protein sequence, read N- to C-terminus: 4-hydroxy-3-methylbut-2-en-1-yl diphosphate synthase (flavodoxin) (372 aa).

Residues Cys-270, Cys-273, Cys-305, and Glu-312 each contribute to the [4Fe-4S] cluster site.

This sequence belongs to the IspG family. It depends on [4Fe-4S] cluster as a cofactor.

It carries out the reaction (2E)-4-hydroxy-3-methylbut-2-enyl diphosphate + oxidized [flavodoxin] + H2O + 2 H(+) = 2-C-methyl-D-erythritol 2,4-cyclic diphosphate + reduced [flavodoxin]. It functions in the pathway isoprenoid biosynthesis; isopentenyl diphosphate biosynthesis via DXP pathway; isopentenyl diphosphate from 1-deoxy-D-xylulose 5-phosphate: step 5/6. Functionally, converts 2C-methyl-D-erythritol 2,4-cyclodiphosphate (ME-2,4cPP) into 1-hydroxy-2-methyl-2-(E)-butenyl 4-diphosphate. The polypeptide is 4-hydroxy-3-methylbut-2-en-1-yl diphosphate synthase (flavodoxin) (Escherichia coli O8 (strain IAI1)).